The sequence spans 633 residues: Chitinase 2 (633 aa).

The GH18 domain occupies 151 to 602; that stretch reads PKLSAYITDW…NAAREGLGYV (452 aa). Residues 275–276 and 306–309 each bind chitin; these read QN and GGWS. Glu-349 functions as the Proton donor in the catalytic mechanism. Residues Tyr-350, 422 to 425, and Trp-582 each bind chitin; that span reads MSYD.

It belongs to the glycosyl hydrolase 18 family. Semipurified toxin complex consists of at least YenA1-YenA2-YenB-YenC1-YenC2-Chi1-Chi2. The Yen-TC:K9 subcomplex is about 26 nm tall and 22 nm in diameter with 5-fold symmetry and 5 copies of YenA1, YenA2, Chi1 and Chi2; the chitinase subunits may be solvent accessible on the exterior the complex. The Yen-TC:K9 subcomplex has no insecticidal activity. The native complex with additional YenB, YenC1 and YenC2 subunits is 16 nm taller and is insecticidal; the toxicity-conferring subunits are present at about 1 copy each.

It localises to the secreted. The catalysed reaction is Random endo-hydrolysis of N-acetyl-beta-D-glucosaminide (1-&gt;4)-beta-linkages in chitin and chitodextrins.. With respect to regulation, toxin complex is secreted when grown at 25 degrees Celsius or less; at higher temperatures the proteins are present intracellularly but not secreted. Functionally, part of an orally active toxin complex (TC) with strong insecticidal effects on larvae of the Coleoptera Costelytra zealandica, Acrossidius tasmania and Adoryphorus couloni and some Lepidoptera larvae. The TC has an endochitinase activity. This subunit might aid infection by degradation of the larval peritrophic membrane. The sequence is that of Chitinase 2 from Yersinia entomophaga.